Here is a 335-residue protein sequence, read N- to C-terminus: Nod factor export ATP-binding protein I (335 aa).

Residues 1–10 (MTQEVPRRLE) are compositionally biased toward basic and acidic residues. The disordered stretch occupies residues 1 to 22 (MTQEVPRRLEPSPFEWKGDAGP). In terms of domain architecture, ABC transporter spans 37-267 (IDLASVTKSY…KIGCQVIEIY (231 aa)). Residue 69–76 (GPNGAGKS) participates in ATP binding.

It belongs to the ABC transporter superfamily. Lipooligosaccharide exporter (TC 3.A.1.102) family. As to quaternary structure, the complex is composed of two ATP-binding proteins (NodI) and two transmembrane proteins (NodJ).

Its subcellular location is the cell inner membrane. In terms of biological role, part of the ABC transporter complex NodIJ involved in the export of the nodulation factors (Nod factors), the bacterial signal molecules that induce symbiosis and subsequent nodulation induction. Nod factors are LCO (lipo-chitin oligosaccharide), a modified beta-1,4-linked N-acetylglucosamine oligosaccharide. This subunit is responsible for energy coupling to the transport system. This chain is Nod factor export ATP-binding protein I, found in Rhizobium meliloti (Ensifer meliloti).